Here is a 610-residue protein sequence, read N- to C-terminus: Glutamine--fructose-6-phosphate aminotransferase [isomerizing] (610 aa).

Cys2 serves as the catalytic Nucleophile; for GATase activity. Residues Cys2–Arg218 form the Glutamine amidotransferase type-2 domain. SIS domains follow at residues Ala286–Arg426 and Leu459–Pro600. Lys605 serves as the catalytic For Fru-6P isomerization activity.

In terms of assembly, homodimer.

Its subcellular location is the cytoplasm. It carries out the reaction D-fructose 6-phosphate + L-glutamine = D-glucosamine 6-phosphate + L-glutamate. Functionally, catalyzes the first step in hexosamine metabolism, converting fructose-6P into glucosamine-6P using glutamine as a nitrogen source. This chain is Glutamine--fructose-6-phosphate aminotransferase [isomerizing], found in Aliivibrio fischeri (strain ATCC 700601 / ES114) (Vibrio fischeri).